The sequence spans 252 residues: Probable ABC transporter ATP-binding protein p29 (252 aa).

Positions 8-252 (LEIKNLTFKN…NILDQVFKND (245 aa)) constitute an ABC transporter domain. 42 to 49 (GSSGQGKS) contacts ATP.

Belongs to the ABC transporter superfamily.

Functionally, part of a high-affinity transport system. The protein is Probable ABC transporter ATP-binding protein p29 of Mesomycoplasma hyorhinis (Mycoplasma hyorhinis).